The chain runs to 236 residues: 2-C-methyl-D-erythritol 4-phosphate cytidylyltransferase (236 aa).

It belongs to the IspD/TarI cytidylyltransferase family. IspD subfamily.

The catalysed reaction is 2-C-methyl-D-erythritol 4-phosphate + CTP + H(+) = 4-CDP-2-C-methyl-D-erythritol + diphosphate. Its pathway is isoprenoid biosynthesis; isopentenyl diphosphate biosynthesis via DXP pathway; isopentenyl diphosphate from 1-deoxy-D-xylulose 5-phosphate: step 2/6. Its function is as follows. Catalyzes the formation of 4-diphosphocytidyl-2-C-methyl-D-erythritol from CTP and 2-C-methyl-D-erythritol 4-phosphate (MEP). In Burkholderia vietnamiensis (strain G4 / LMG 22486) (Burkholderia cepacia (strain R1808)), this protein is 2-C-methyl-D-erythritol 4-phosphate cytidylyltransferase.